The primary structure comprises 294 residues: N-acetylmuramic acid 6-phosphate etherase (294 aa).

In terms of domain architecture, SIS spans 54-217 (VIKSFEEEGR…STASMIGVGK (164 aa)). Glutamate 82 acts as the Proton donor in catalysis. The active site involves glutamate 113.

Belongs to the GCKR-like family. MurNAc-6-P etherase subfamily. In terms of assembly, homodimer.

It carries out the reaction N-acetyl-D-muramate 6-phosphate + H2O = N-acetyl-D-glucosamine 6-phosphate + (R)-lactate. The protein operates within amino-sugar metabolism; N-acetylmuramate degradation. Specifically catalyzes the cleavage of the D-lactyl ether substituent of MurNAc 6-phosphate, producing GlcNAc 6-phosphate and D-lactate. In Bacillus cereus (strain ATCC 10987 / NRS 248), this protein is N-acetylmuramic acid 6-phosphate etherase.